A 1066-amino-acid chain; its full sequence is Ribosomal protein S6 kinase delta-1 (1066 aa).

One can recognise a PX domain in the interval Ser8–Asp132. The disordered stretch occupies residues Val207 to Gly228. Basic and acidic residues predominate over residues Glu212 to Arg223. One can recognise an MIT domain in the interval Val277–Ser305. A phosphoserine mark is found at Ser282, Ser423, Ser427, Ser449, and Ser455. The Protein kinase 1 domain occupies Gly344–Gln445. The interval Val441 to Thr509 is disordered. Low complexity predominate over residues Ser448–Ser458. A compositionally biased stretch (polar residues) spans Ser474–Asp483. Residues Asp492 to Ser503 show a composition bias toward low complexity. Phosphoserine is present on residues Ser494, Ser528, Ser583, Ser605, Ser608, Ser640, Ser661, Ser664, Ser667, and Ser794. A disordered region spans residues His553–Ser596. Low complexity predominate over residues Ser582 to Ser593. A Protein kinase 2 domain is found at Ser794–Phe1056. Residues Gly801–Val809 and Arg820 each bind ATP. Residue Ser872 is modified to Phosphoserine. The active-site Proton acceptor is the Asp929.

It belongs to the protein kinase superfamily. Ser/Thr protein kinase family. S6 kinase subfamily. In terms of assembly, interacts with SPHK1 and phosphatidylinositol 3-phosphate. Interacts (via PX domain) with PRDX3. Highly expressed in testis, skeletal muscle, brain, heart, placenta, kidney and liver and weakly expressed in thymus, small intestine, lung and colon.

It is found in the cytoplasm. The protein resides in the membrane. The protein localises to the early endosome. The enzyme catalyses L-seryl-[protein] + ATP = O-phospho-L-seryl-[protein] + ADP + H(+). It catalyses the reaction L-threonyl-[protein] + ATP = O-phospho-L-threonyl-[protein] + ADP + H(+). Its function is as follows. May be involved in transmitting sphingosine-1 phosphate (SPP)-mediated signaling into the cell. Plays a role in the recruitment of PRDX3 to early endosomes. In Homo sapiens (Human), this protein is Ribosomal protein S6 kinase delta-1 (RPS6KC1).